The following is a 971-amino-acid chain: Sodium/calcium exchanger 1 (971 aa).

The first 32 residues, 1–32, serve as a signal peptide directing secretion; sequence MLRLSLPPNVSMGFRLVTLVALLFTHVDHITA. The Extracellular segment spans residues 33–71; the sequence is DTEAETGGNETTECTGSYYCKKGVILPIWEPQDPSFGDK. An N-linked (GlcNAc...) asparagine glycan is attached at asparagine 41. The helical transmembrane segment at 72–92 threads the bilayer; sequence IARATVYFVAMVYMFLGVSII. Residues 93 to 133 are Cytoplasmic-facing; the sequence is ADRFMSSIEVITSQEKEITIKKPNGETTKTTVRIWNETVSN. A helical transmembrane segment spans residues 134–154; sequence LTLMALGSSAPEILLSVIEVC. The stretch at 138 to 178 is one Alpha-1 repeat; sequence ALGSSAPEILLSVIEVCGHNFTAGDLGPSTIVGSAAFNMFI. Over 155 to 167 the chain is Extracellular; it reads GHNFTAGDLGPST. Asparagine 157 is a glycosylation site (N-linked (GlcNAc...) asparagine). A helical membrane pass occupies residues 168-188; sequence IVGSAAFNMFIIIALCVYVVP. At 189–201 the chain is on the cytoplasmic side; that stretch reads DGETRKIKHLRVF. A helical transmembrane segment spans residues 202 to 222; sequence FVTAAWSIFAYTWLYIILSVS. Residues 223 to 228 lie on the Extracellular side of the membrane; the sequence is SPGVVE. Residues 229–249 traverse the membrane as a helical segment; that stretch reads VWEGLLTFFFFPICVVFAWVA. The Cytoplasmic portion of the chain corresponds to 250-798; the sequence is DRRLLFYKYV…FVPPTEYWNG (549 aa). The tract at residues 251–270 is putative calmodulin-binding region; sequence RRLLFYKYVYKRYRAGKQRG. A phosphoserine mark is found at serine 282 and serine 389. Calx-beta domains are found at residues 393 to 493 and 524 to 624; these read VNMD…VHLS and ATIT…IEIG. Ca(2+) contacts are provided by glutamate 417, aspartate 453, aspartate 478, aspartate 479, isoleucine 481, glutamate 483, glutamate 486, aspartate 530, aspartate 531, aspartate 532, glutamate 548, aspartate 584, aspartate 610, glutamate 611, glutamate 612, and glutamate 716. A helical transmembrane segment spans residues 799–819; it reads WACFIVSILMIGLLTAFIGDL. The Extracellular segment spans residues 820–822; it reads ASH. Residues 823 to 843 form a helical membrane-spanning segment; it reads FGCTIGLKDSVTAVVFVALGT. An Alpha-2 repeat occupies 840-876; the sequence is ALGTSVPDTFASKVAATQDQYADASIGNVTGSNAVNV. At 844–872 the chain is on the cytoplasmic side; it reads SVPDTFASKVAATQDQYADASIGNVTGSN. A helical transmembrane segment spans residues 873–893; sequence AVNVFLGIGVAWSIAAIYHAA. Residues 894-904 lie on the Extracellular side of the membrane; the sequence is NGEQFKVSPGT. A helical membrane pass occupies residues 905–925; sequence LAFSVTLFTIFAFINVGVLLY. Residues 926-942 lie on the Cytoplasmic side of the membrane; that stretch reads RRRPEIGGELGGPRTAK. The chain crosses the membrane as a helical span at residues 943–963; that stretch reads LLTSSLFVLLWLLYIFFSSLE. Residues 964 to 971 are Extracellular-facing; it reads AYCHIKGF.

This sequence belongs to the Ca(2+):cation antiporter (CaCA) (TC 2.A.19) family. SLC8 subfamily. In terms of tissue distribution, detected in heart, brain cortex and hippocampus (at protein level). Cardiac sarcolemma or brain, and spleen. Expressed in all regions of the kidney, highest levels of expression in the distal convoluted tubule. Expressed throughout the CNS, in decreasing order of abundance in hippocampus, cortex, cerebellum, hypothalamus, midbrain and striatum. Expressed in numerous regions of the brain including multiple cortical layers, hippocampus, septal nuclei, thalamic nuclei, cerebellum, hypothalamus, olfactory bulb and brainstem. Also expressed in various regions of the spinal cord, ventricles and atria of the heart, lung, adrenals and kidney. Isoform 4 seems to be a predominant isoform in aorta, stomach, liver, and kidney.

It localises to the cell membrane. The protein localises to the cell projection. The protein resides in the dendrite. It carries out the reaction Ca(2+)(in) + 3 Na(+)(out) = Ca(2+)(out) + 3 Na(+)(in). Activated by micromolar levels of Ca(2+). Its activity is regulated as follows. Only active at low calcium concentrations. Not activated by PKC. With respect to regulation, active at all calcium levels tested. Activated by PKC. Only active at low calcium concentrations. Activated by PKC. Functionally, mediates the exchange of one Ca(2+) ion against three to four Na(+) ions across the cell membrane, and thereby contributes to the regulation of cytoplasmic Ca(2+) levels and Ca(2+)-dependent cellular processes. Contributes to Ca(2+) transport during excitation-contraction coupling in muscle. In a first phase, voltage-gated channels mediate the rapid increase of cytoplasmic Ca(2+) levels due to release of Ca(2+) stores from the endoplasmic reticulum. SLC8A1 mediates the export of Ca(2+) from the cell during the next phase, so that cytoplasmic Ca(2+) levels rapidly return to baseline. Required for normal embryonic heart development and the onset of heart contractions. In Rattus norvegicus (Rat), this protein is Sodium/calcium exchanger 1 (Slc8a1).